The primary structure comprises 206 residues: Outer-membrane lipoprotein LolB (206 aa).

A signal peptide spans 1 to 18 (MKTFKFLTALFATAILTA). The N-palmitoyl cysteine moiety is linked to residue C19. C19 carries S-diacylglycerol cysteine lipidation.

Belongs to the LolB family. As to quaternary structure, monomer.

It localises to the cell outer membrane. In terms of biological role, plays a critical role in the incorporation of lipoproteins in the outer membrane after they are released by the LolA protein. In Haemophilus influenzae (strain PittEE), this protein is Outer-membrane lipoprotein LolB.